A 289-amino-acid polypeptide reads, in one-letter code: Proteasome subunit beta (289 aa).

The propeptide at 1 to 59 (MEHTPRNAGFALPAAYMSTMTSSFIDFLKAEAPDLLPRARVENMPAVPGGGSAFEPPHG) is removed in mature form; by autocatalysis. Thr60 acts as the Nucleophile in catalysis.

Belongs to the peptidase T1B family. As to quaternary structure, the 20S proteasome core is composed of 14 alpha and 14 beta subunits that assemble into four stacked heptameric rings, resulting in a barrel-shaped structure. The two inner rings, each composed of seven catalytic beta subunits, are sandwiched by two outer rings, each composed of seven alpha subunits. The catalytic chamber with the active sites is on the inside of the barrel. Has a gated structure, the ends of the cylinder being occluded by the N-termini of the alpha-subunits. Is capped by the proteasome-associated ATPase, ARC.

The protein resides in the cytoplasm. The enzyme catalyses Cleavage of peptide bonds with very broad specificity.. Its pathway is protein degradation; proteasomal Pup-dependent pathway. Its activity is regulated as follows. The formation of the proteasomal ATPase ARC-20S proteasome complex, likely via the docking of the C-termini of ARC into the intersubunit pockets in the alpha-rings, may trigger opening of the gate for substrate entry. Interconversion between the open-gate and close-gate conformations leads to a dynamic regulation of the 20S proteasome proteolysis activity. Functionally, component of the proteasome core, a large protease complex with broad specificity involved in protein degradation. The polypeptide is Proteasome subunit beta (Saccharomonospora viridis (strain ATCC 15386 / DSM 43017 / JCM 3036 / CCUG 5913 / NBRC 12207 / NCIMB 9602 / P101) (Thermoactinomyces viridis)).